An 877-amino-acid chain; its full sequence is Mediator of RNA polymerase II transcription subunit 16 (877 aa).

WD repeat units follow at residues tryptophan 21 to tryptophan 71, aspartate 72 to glutamate 119, serine 120 to serine 165, proline 166 to threonine 203, glutamate 204 to threonine 257, glutamate 258 to proline 334, threonine 335 to aspartate 415, glutamate 416 to serine 460, and methionine 461 to valine 495. The disordered stretch occupies residues proline 848–proline 877. Residues arginine 866–proline 877 show a composition bias toward basic and acidic residues.

This sequence belongs to the Mediator complex subunit 16 family. In terms of assembly, component of the Mediator complex, which is composed of MED1, MED4, MED6, MED7, MED8, MED9, MED10, MED11, MED12, MED13, MED13L, MED14, MED15, MED16, MED17, MED18, MED19, MED20, MED21, MED22, MED23, MED24, MED25, MED26, MED27, MED29, MED30, MED31, CCNC, CDK8 and CDC2L6/CDK11. The MED12, MED13, CCNC and CDK8 subunits form a distinct module termed the CDK8 module. Mediator containing the CDK8 module is less active than Mediator lacking this module in supporting transcriptional activation. Individual preparations of the Mediator complex lacking one or more distinct subunits have been variously termed ARC, CRSP, DRIP, PC2, SMCC and TRAP.

Its subcellular location is the nucleus. Its function is as follows. Component of the Mediator complex, a coactivator involved in the regulated transcription of nearly all RNA polymerase II-dependent genes. Mediator functions as a bridge to convey information from gene-specific regulatory proteins to the basal RNA polymerase II transcription machinery. Mediator is recruited to promoters by direct interactions with regulatory proteins and serves as a scaffold for the assembly of a functional preinitiation complex with RNA polymerase II and the general transcription factors. This is Mediator of RNA polymerase II transcription subunit 16 (MED16) from Homo sapiens (Human).